Reading from the N-terminus, the 657-residue chain is Methionine--tRNA ligase (657 aa).

Residues 13-23 (YYPSGNLHIGH) carry the 'HIGH' region motif. Positions 308 to 312 (KMSKS) match the 'KMSKS' region motif. Lys311 provides a ligand contact to ATP. Positions 557-657 (DFDKVEIKAA…SAIPNGAVIK (101 aa)) constitute a tRNA-binding domain.

Belongs to the class-I aminoacyl-tRNA synthetase family. MetG type 2B subfamily. As to quaternary structure, homodimer.

It is found in the cytoplasm. The enzyme catalyses tRNA(Met) + L-methionine + ATP = L-methionyl-tRNA(Met) + AMP + diphosphate. In terms of biological role, is required not only for elongation of protein synthesis but also for the initiation of all mRNA translation through initiator tRNA(fMet) aminoacylation. This Staphylococcus aureus (strain COL) protein is Methionine--tRNA ligase.